A 519-amino-acid polypeptide reads, in one-letter code: Pleckstrin homology domain-containing family A member 8 (519 aa).

Positions methionine 1–alanine 93 constitute a PH domain. At threonine 139 the chain carries Phosphothreonine. Serine 145 carries the post-translational modification Phosphoserine. Threonine 153 is subject to Phosphothreonine. The segment at glycine 275–glutamate 302 is disordered. The interval isoleucine 330–lysine 473 is glycolipid transfer protein homology domain.

As to quaternary structure, homodimer. Interacts with ARF1; the interaction together with phosphatidylinositol 4-phosphate binding is required for FAPP2 GlcCer transfer ability.

Its subcellular location is the golgi apparatus. The protein localises to the trans-Golgi network membrane. It localises to the membrane. In terms of biological role, cargo transport protein that is required for apical transport from the trans-Golgi network (TGN). Transports AQP2 from the trans-Golgi network (TGN) to sites of AQP2 phosphorylation. Mediates the non-vesicular transport of glucosylceramide (GlcCer) from the trans-Golgi network (TGN) to the plasma membrane and plays a pivotal role in the synthesis of complex glycosphingolipids. Binding of both phosphatidylinositol 4-phosphate (PIP) and ARF1 are essential for the GlcCer transfer ability. Also required for primary cilium formation, possibly by being involved in the transport of raft lipids to the apical membrane, and for membrane tubulation. The chain is Pleckstrin homology domain-containing family A member 8 (Plekha8) from Mus musculus (Mouse).